Consider the following 134-residue polypeptide: Small ribosomal subunit protein uS11 (134 aa).

It belongs to the universal ribosomal protein uS11 family. As to quaternary structure, part of the 30S ribosomal subunit. Interacts with proteins S7 and S18. Binds to IF-3.

Located on the platform of the 30S subunit, it bridges several disparate RNA helices of the 16S rRNA. Forms part of the Shine-Dalgarno cleft in the 70S ribosome. In Corynebacterium diphtheriae (strain ATCC 700971 / NCTC 13129 / Biotype gravis), this protein is Small ribosomal subunit protein uS11.